The primary structure comprises 433 residues: Steroid hormone receptor ERR2 (433 aa).

Residues 1 to 38 form a disordered region; sequence MSSEDRHLGSSCGSFIKTEPSSPSSGIDALSHHSPSGS. Residues 93–211 are interaction with NANOG; sequence YMLNAIPKRL…SPPAKKPLTK (119 aa). Residues 100 to 186 constitute a DNA-binding region (nuclear receptor); the sequence is KRLCLVCGDI…RVRGGRQKYK (87 aa). 2 NR C4-type zinc fingers span residues 103 to 123 and 139 to 163; these read CLVC…CEAC and CPAT…FMKC. The tract at residues 203 to 433 is essential for ESRRB transcriptional activity and interaction with NCOA3; sequence PPAKKPLTKI…LFLEMLEAKV (231 aa). The region spanning 208–432 is the NR LBD domain; it reads PLTKIVSNLL…KLFLEMLEAK (225 aa).

Belongs to the nuclear hormone receptor family. NR3 subfamily. Binds DNA as a monomer. Interacts with NR0B1; represses ESRRB activity at the GATA6 promoter. Interacts with NANOG; reciprocally modulates their transcriptional activities and activates POU5F1 expression. Interacts with NCOA3; mediates the interaction between ESRRB and RNA polymerase II complexes and allows NCOA3 corecruitment to ESRRB, KLF4, NANOG, and SOX2 enhancer regions to trigger ESRRB-dependent gene activation involved in self-renewal and pluripotency. Interacts with KDM1A; co-occupes the core set of ESRRB targets including ELF5 and EOMES. Interacts with the multiprotein complex Integrator, at least composed of INTS1, INTS2, INTS3, INTS4, INTS5, INTS6, INTS7, INTS8, INTS9/RC74, INTS10, INTS11/CPSF3L and INTS12; ESRRB is probably not a core component of the integrator complex and associates to integrator via its interaction with INTS1 and INTS9; attracts the transcriptional machinery. Interacts with JARID2. Interacts with POU5F1; recruits ESRRB near the POU5F1-SOX2 element in the NANOG proximal promoter leading to activation of NANOG expression; the interaction is DNA independent. In terms of processing, acetylated by PCAF/KAT2 (in vitro). As to expression, highly expressed in undifferentiated ESCs. Expressed in immature horizontal cells and in rod photoreceptors at intermediate and late stages of differentiation. Expressed in endolymph-producing epithelial cells.

The protein resides in the nucleus. Its subcellular location is the cytoplasm. It is found in the chromosome. Functionally, transcription factor that binds a canonical ESRRB recognition (ERRE) sequence 5'TCAAGGTCA-3' localized on promoter and enhancer of targets genes regulating their expression or their transcriptional activity. Plays a role, in a LIF-independent manner, in maintainance of self-renewal and pluripotency of embryonic and trophoblast stem cells through different signaling pathways including FGF signaling pathway and Wnt signaling pathways. Involved in morula development (2-16 cells embryos) by acting as a regulator at the 8-cell stage. Upon FGF signaling pathway activation, interacts with KDM1A by directly binding to enhancer site of ELF5 and EOMES and activating their transcription leading to self-renewal of trophoblast stem cells. Also regulates expression of multiple rod-specific genes and is required for survival of this cell type. Plays a role as transcription factor activator of GATA6, NR0B1, POU5F1 and PERM1. Plays a role as transcription factor repressor of NFE2L2 transcriptional activity and ESR1 transcriptional activity. During mitosis remains bound to a subset of interphase target genes, including pluripotency regulators, through the canonical ESRRB recognition (ERRE) sequence, leading to their transcriptional activation in early G1 phase. Can coassemble on structured DNA elements with other transcription factors like SOX2, POU5F1, KDM1A and NCOA3 to trigger ESRRB-dependent gene activation. This mechanism, in the case of SOX2 corecruitment prevents the embryonic stem cells (ESCs) to epiblast stem cells (EpiSC) transition through positive regulation of NR0B1 that inhibits the EpiSC transcriptional program. Also plays a role inner ear development by controlling expression of ion channels and transporters and in early placentation. The protein is Steroid hormone receptor ERR2 of Mus musculus (Mouse).